The following is a 197-amino-acid chain: Phospholipid hydroperoxide glutathione peroxidase (197 aa).

Residue serine 40 is modified to Phosphoserine. The active site involves selenocysteine 73. Selenocysteine 73 is a non-standard amino acid (selenocysteine).

It belongs to the glutathione peroxidase family. In terms of assembly, monomer. Has a tendency to form higher mass oligomers. Interacts with FUNDC1; this interaction promotes GPX4 recruitment into mitochondria through TOM/TIM complex where it is degraded by mitophagy.

It is found in the mitochondrion. It localises to the cytoplasm. The enzyme catalyses a hydroperoxy polyunsaturated fatty acid + 2 glutathione = a hydroxy polyunsaturated fatty acid + glutathione disulfide + H2O. The catalysed reaction is 2 glutathione + H2O2 = glutathione disulfide + 2 H2O. It catalyses the reaction tert-butyl hydroperoxide + 2 glutathione = tert-butanol + glutathione disulfide + H2O. It carries out the reaction cumene hydroperoxide + 2 glutathione = 2-phenylpropan-2-ol + glutathione disulfide + H2O. The enzyme catalyses (9S)-hydroperoxy-(10E,12Z)-octadecadienoate + 2 glutathione = (9S)-hydroxy-(10E,12Z)-octadecadienoate + glutathione disulfide + H2O. The catalysed reaction is (13S)-hydroperoxy-(9Z,11E)-octadecadienoate + 2 glutathione = (13S)-hydroxy-(9Z,11E)-octadecadienoate + glutathione disulfide + H2O. It catalyses the reaction (5S)-hydroperoxy-(6E,8Z,11Z,14Z)-eicosatetraenoate + 2 glutathione = (5S)-hydroxy-(6E,8Z,11Z,14Z)-eicosatetraenoate + glutathione disulfide + H2O. It carries out the reaction (12R)-hydroperoxy-(5Z,8Z,10E,14Z)-eicosatetraenoate + 2 glutathione = (12R)-hydroxy-(5Z,8Z,10E,14Z)-eicosatetraenoate + glutathione disulfide + H2O. The enzyme catalyses (12S)-hydroperoxy-(5Z,8Z,10E,14Z)-eicosatetraenoate + 2 glutathione = (12S)-hydroxy-(5Z,8Z,10E,14Z)-eicosatetraenoate + glutathione disulfide + H2O. The catalysed reaction is (15S)-hydroperoxy-(5Z,8Z,11Z,13E)-eicosatetraenoate + 2 glutathione = (15S)-hydroxy-(5Z,8Z,11Z,13E)-eicosatetraenoate + glutathione disulfide + H2O. It catalyses the reaction (5S)-hydroperoxy-(6E,8Z,11Z,14Z,17Z)-eicosapentaenoate + 2 glutathione = (5S)-hydroxy-(6E,8Z,11Z,14Z,17Z)-eicosapentaenoate + glutathione disulfide + H2O. It carries out the reaction (12S)-hydroperoxy-(5Z,8Z,10E,14Z,17Z)-eicosapentaenoate + 2 glutathione = (12S)-hydroxy-(5Z,8Z,10E,14Z,17Z)-eicosapentaenoate + glutathione disulfide + H2O. The enzyme catalyses (15S)-hydroperoxy-(5Z,8Z,11Z,13E,17Z)-eicosapentaenoate + 2 glutathione = (15S)-hydroxy-(5Z,8Z,11Z,13E,17Z)-eicosapentaenoate + glutathione disulfide + H2O. The catalysed reaction is (15S)-hydroperoxy-(11Z,13E)-eicosadienoate + 2 glutathione = (15S)-hydroxy-(11Z,13E)-eicosadienoate + glutathione disulfide + H2O. It catalyses the reaction (17S)-hydroperoxy-(4Z,7Z,10Z,13Z,15E,19Z)-docosahexaenoate + 2 glutathione = (17S)-hydroxy-(4Z,7Z,10Z,13Z,15E,19Z)-docosahexaenoate + glutathione disulfide + H2O. It carries out the reaction a hydroperoxy-1,2-diacyl-glycero-3-phosphocholine + 2 glutathione = a hydroxy-1,2-diacyl-glycero-3-phosphocholine + glutathione disulfide + H2O. Its function is as follows. Essential antioxidant peroxidase that directly reduces phospholipid hydroperoxide even if they are incorporated in membranes and lipoproteins. Can also reduce fatty acid hydroperoxide, cholesterol hydroperoxide and thymine hydroperoxide. Plays a key role in protecting cells from oxidative damage by preventing membrane lipid peroxidation. Required to prevent cells from ferroptosis, a non-apoptotic cell death resulting from an iron-dependent accumulation of lipid reactive oxygen species. The presence of selenocysteine (Sec) versus Cys at the active site is essential for life: it provides resistance to overoxidation and prevents cells against ferroptosis. The presence of Sec at the active site is also essential for the survival of a specific type of parvalbumin-positive interneurons, thereby preventing against fatal epileptic seizures. May be required to protect cells from the toxicity of ingested lipid hydroperoxides. Required for normal sperm development and male fertility. Essential for maturation and survival of photoreceptor cells. Plays a role in a primary T-cell response to viral and parasitic infection by protecting T-cells from ferroptosis and by supporting T-cell expansion. Plays a role of glutathione peroxidase in platelets in the arachidonic acid metabolism. Reduces hydroperoxy ester lipids formed by a 15-lipoxygenase that may play a role as down-regulator of the cellular 15-lipoxygenase pathway. Can also reduce small soluble hydroperoxides such as H2O2, cumene hydroperoxide and tert-butyl hydroperoxide. The chain is Phospholipid hydroperoxide glutathione peroxidase from Sus scrofa (Pig).